The primary structure comprises 357 residues: Palmitoyltransferase ZDHHC20-A (357 aa).

Residues 1-14 lie on the Cytoplasmic side of the membrane; the sequence is MAPSHAVRCCQRGL. Residues 15-35 form a helical membrane-spanning segment; sequence SWIPVIFINLVVCWSYYAYVV. The Lumenal portion of the chain corresponds to 36 to 50; it reads ELCIYTIPNVNEQVI. A helical membrane pass occupies residues 51 to 71; sequence YLVVFHAFFFMFMWSYWKTIS. Over 72-166 the chain is Cytoplasmic; it reads SKPTNPSKEF…NNCVGFSNYK (95 aa). A DHHC domain is found at 123 to 173; sequence RYCDRCQLIKPDRCHHCSTCDKCVLKMDHHCPWVNNCVGFSNYKFFVLFLA. Cys-153 (S-palmitoyl cysteine intermediate) is an active-site residue. The helical transmembrane segment at 167 to 187 threads the bilayer; sequence FFVLFLAYSMLYCVYIAATVL. The Lumenal segment spans residues 188 to 204; sequence QYFIKFWTNQLPDTHAK. A helical membrane pass occupies residues 205-228; sequence FHVLFLFFVAAMFFISILSLFSYH. The Cytoplasmic segment spans residues 229–357; it reads LWLVGKNRTT…PVCVTLENES (129 aa).

Belongs to the DHHC palmitoyltransferase family.

Its subcellular location is the golgi apparatus membrane. It is found in the cell membrane. It localises to the cytoplasm. The protein localises to the perinuclear region. The protein resides in the endoplasmic reticulum membrane. Its subcellular location is the endoplasmic reticulum-Golgi intermediate compartment membrane. The catalysed reaction is L-cysteinyl-[protein] + hexadecanoyl-CoA = S-hexadecanoyl-L-cysteinyl-[protein] + CoA. It catalyses the reaction L-cysteinyl-[protein] + tetradecanoyl-CoA = S-tetradecanoyl-L-cysteinyl-[protein] + CoA. The enzyme catalyses L-cysteinyl-[protein] + octadecanoyl-CoA = S-octadecanoyl-L-cysteinyl-[protein] + CoA. Its function is as follows. Palmitoyltransferase that could catalyze the addition of palmitate onto various protein substrates. Catalyzes palmitoylation of Cys residues on protein substrates and has a preference for acyl-CoA with C16 fatty acid chains but may also utilize acyl-CoA with C14 and C18 fatty acid chains. This chain is Palmitoyltransferase ZDHHC20-A, found in Danio rerio (Zebrafish).